A 399-amino-acid chain; its full sequence is MNMARDIWFETVAIAQQRARKRLPKSVYSSLISASEKGVTVTDNVESFAELGFAPHVVGAPEKRDMATTVMGQQISLPVIISPTGVQAVHPDGEVAVARAAAARGTAMGLSSFASKPIEEVVAVNDKIFFQIYWLGDRDAILARAERAKAAGAVGLIVTTDWSFSHGRDWGSPKIPEKMDLKTMVTMMPEALTKPRWLWQWGKTMRPPNLRVPNQGARGEDGPPFFQAYGEWMGTPPPTWEDIAWLREQWDGPFMLKGVIRVDDAKRAVDAGVSAISVSNHGGNNLDGTPAAIRALPVIAEAVGDQVEVLLDGGIRRGSDVVKAVALGARAVMIGRAYLWGLAAEGQVGVENVLDILRGGIDSALMGLGRSSIHDLVPEDILVPEGFTRALGVPPASGS.

The 383-residue stretch at alanine 4–glycine 386 folds into the FMN hydroxy acid dehydrogenase domain. Serine 111 and glutamine 131 together coordinate FMN. Residue tyrosine 133 participates in a 2-oxocarboxylate binding. An FMN-binding site is contributed by threonine 159. A 2-oxocarboxylate is bound at residue arginine 168. Lysine 257 provides a ligand contact to FMN. Histidine 281 acts as the Proton acceptor in catalysis. FMN contacts are provided by residues aspartate 312 to arginine 316 and glycine 335 to arginine 336.

The protein belongs to the FMN-dependent alpha-hydroxy acid dehydrogenase family. FMN serves as cofactor.

The enzyme catalyses 3-amino-5-[(4-hydroxyphenyl)methyl]-4,4-dimethyl-2-pyrrolidin-2-one + O2 + H2O = pre-mycofactocin + H2O2 + NH4(+). Its function is as follows. Involved in the biosynthesis of the enzyme cofactor mycofactocin (MFT). Catalyzes the oxidative deamination of AHDP (3-amino-5-[(4-hydroxyphenyl)methyl]-4,4-dimethyl-2-pyrrolidin-2-one), forming an alpha-keto amide moiety on the resulting molecule, which is called pre-mycofactocin (PMFT). This reaction occurs via a 5-[(4-hydroxyphenyl)methyl]-3-imino-4,4-dimethylpyrrolidin-2-one intermediate, which converts to PMFT. The alpha-keto amide moiety is the redox-active center for the redox activity of mycofactocin. Is required for the in vivo ethanol assimilation in M.smegmatis. The sequence is that of Pre-mycofactocin synthase from Mycolicibacterium smegmatis (strain ATCC 700084 / mc(2)155) (Mycobacterium smegmatis).